A 512-amino-acid polypeptide reads, in one-letter code: 2-isopropylmalate synthase (512 aa).

Residues 5–268 (LIIFDTTLRD…DLGIATQHIL (264 aa)) form the Pyruvate carboxyltransferase domain. Residues Asp-14, His-202, His-204, and Asn-239 each coordinate Mn(2+). The segment at 394-512 (GFVSLFQQSE…NKADRVAAQG (119 aa)) is regulatory domain.

It belongs to the alpha-IPM synthase/homocitrate synthase family. LeuA type 1 subfamily. As to quaternary structure, homodimer. Mn(2+) is required as a cofactor.

It localises to the cytoplasm. It catalyses the reaction 3-methyl-2-oxobutanoate + acetyl-CoA + H2O = (2S)-2-isopropylmalate + CoA + H(+). The protein operates within amino-acid biosynthesis; L-leucine biosynthesis; L-leucine from 3-methyl-2-oxobutanoate: step 1/4. Functionally, catalyzes the condensation of the acetyl group of acetyl-CoA with 3-methyl-2-oxobutanoate (2-ketoisovalerate) to form 3-carboxy-3-hydroxy-4-methylpentanoate (2-isopropylmalate). The sequence is that of 2-isopropylmalate synthase from Verminephrobacter eiseniae (strain EF01-2).